We begin with the raw amino-acid sequence, 621 residues long: DNA mismatch repair protein MutL (621 aa).

This sequence belongs to the DNA mismatch repair MutL/HexB family.

This protein is involved in the repair of mismatches in DNA. It is required for dam-dependent methyl-directed DNA mismatch repair. May act as a 'molecular matchmaker', a protein that promotes the formation of a stable complex between two or more DNA-binding proteins in an ATP-dependent manner without itself being part of a final effector complex. The protein is DNA mismatch repair protein MutL of Xylella fastidiosa (strain M12).